Consider the following 664-residue polypeptide: MSNRRETRKAAQDFIDNLKPLRRPNSEKIFIEGSRPDIQVGMRQIHQTDTRIVNTRGEETFEANPPIKVYDCAGPYSDPNADINVRRGLPKLREGWILARSDTEELNSASSNFTQQRLADDGLDHLRFDVLPKPRRAKAGKRVTQLHYARQGIITPEMEYIAIRENMARDEVTDEQLNRKKPGEAFGALVSKPITPEFVRDEVARGRAIIPANINHPEAEPMIIGRNFLVKVNANIGNSAVTSSIEEEVEKLVWSTRWGADTVMDLSTGRYIHETREWIVRNSPVPIGTVPIYQALEKVNGIAEDLNWEVFRDTLIEQAEQGVDYFTIHAGVLLRYVPMTAKRVTGIVSRGGSIMAKWCLSHHQENFLYTHFRDICELCAAYDVSLSLGDGMRPGSIADANDEAQFAELETLGELVKIAWEYDVQTIIEGPGHIPMQLIKENMDKQLEHCAEAPFYTLGPQTTDIAPGYDHFTSGIGAAMIAWYGCAMLCYVTPKEHLGLPNKEDVKQGLIAYKIAAHAADVAKGHPGAQIRDNALSKARFEFRWEDQYNLGLDPDTARAYHDETLPQESAKVAHFCSMCGPKFCSMKITQDVRDYAASLENAARSEADSVQTLEVGAAESYSKAESYARAGMDKMSATFKQTGSALYSETHVEAALSTEKEPV.

Substrate contacts are provided by residues N235, M264, Y293, H329, 349 to 351, 390 to 393, and E429; these read SRG and DGMR. H433 serves as a coordination point for Zn(2+). Residue Y456 participates in substrate binding. H497 provides a ligand contact to Zn(2+). Residues C577, C580, and C585 each coordinate [4Fe-4S] cluster.

This sequence belongs to the ThiC family. Homodimer. [4Fe-4S] cluster serves as cofactor.

It carries out the reaction 5-amino-1-(5-phospho-beta-D-ribosyl)imidazole + S-adenosyl-L-methionine = 4-amino-2-methyl-5-(phosphooxymethyl)pyrimidine + CO + 5'-deoxyadenosine + formate + L-methionine + 3 H(+). It participates in cofactor biosynthesis; thiamine diphosphate biosynthesis. In terms of biological role, catalyzes the synthesis of the hydroxymethylpyrimidine phosphate (HMP-P) moiety of thiamine from aminoimidazole ribotide (AIR) in a radical S-adenosyl-L-methionine (SAM)-dependent reaction. This chain is Phosphomethylpyrimidine synthase, found in Shewanella amazonensis (strain ATCC BAA-1098 / SB2B).